Here is a 268-residue protein sequence, read N- to C-terminus: Tetraspanin-5 (268 aa).

The Cytoplasmic segment spans residues 1–17; that stretch reads MSGKHYKGPEVSCCIKY. The chain crosses the membrane as a helical span at residues 18–38; it reads FIFGFNVIFWFLGITFLGIGL. At 39 to 61 the chain is on the extracellular side; the sequence is WAWNEKGVLSNISSITDLGGFDP. An N-linked (GlcNAc...) asparagine glycan is attached at Asn49. Residues 62 to 82 traverse the membrane as a helical segment; it reads VWLFLVVGGVMFILGFAGCIG. Residues 83–92 lie on the Cytoplasmic side of the membrane; the sequence is ALRENTFLLK. Residues 93 to 113 traverse the membrane as a helical segment; that stretch reads FFSVFLGIIFFLELTAGVLAF. Over 114–232 the chain is Extracellular; the sequence is VFKDWIKDQL…PQFEKWLQDN (119 aa). 4 disulfides stabilise this stretch: Cys153/Cys221, Cys154/Cys186, Cys170/Cys180, and Cys187/Cys200. 2 N-linked (GlcNAc...) asparagine glycosylation sites follow: Asn169 and Asn174. Asn232 carries N-linked (GlcNAc...) asparagine glycosylation. A helical transmembrane segment spans residues 233–253; that stretch reads LTIVAGIFIGIALLQIFGICL. Residues 254–268 lie on the Cytoplasmic side of the membrane; sequence AQNLVSDIEAVRASW.

The protein belongs to the tetraspanin (TM4SF) family. In terms of assembly, interacts with ADAM10; the interaction influences ADAM10 substrate specificity, endocytosis and turnover. Post-translationally, palmitoylated.

It localises to the cell membrane. Its function is as follows. Part of TspanC8 subgroup, composed of 6 members that interact with the transmembrane metalloprotease ADAM10. This interaction is required for ADAM10 exit from the endoplasmic reticulum and for enzymatic maturation and trafficking to the cell surface as well as substrate specificity. Different TspanC8/ADAM10 complexes have distinct substrates. Promotes ADAM10-mediated cleavage of CD44. Seems to regulate VE-cadherin expression in endothelial cells probably through interaction with ADAM10, promoting leukocyte transmigration. The chain is Tetraspanin-5 from Homo sapiens (Human).